We begin with the raw amino-acid sequence, 310 residues long: Probable manganese-dependent inorganic pyrophosphatase (310 aa).

Positions 9, 13, 15, 76, 98, and 150 each coordinate Mn(2+).

This sequence belongs to the PPase class C family. It depends on Mn(2+) as a cofactor.

It localises to the cytoplasm. The enzyme catalyses diphosphate + H2O = 2 phosphate + H(+). The chain is Probable manganese-dependent inorganic pyrophosphatase from Streptococcus thermophilus (strain ATCC BAA-491 / LMD-9).